A 344-amino-acid chain; its full sequence is tRNA N6-adenosine threonylcarbamoyltransferase (344 aa).

Fe cation is bound by residues histidine 112 and histidine 116. Residues 134–138 (LASGG), aspartate 167, glycine 180, and asparagine 280 contribute to the substrate site. Aspartate 308 contributes to the Fe cation binding site.

It belongs to the KAE1 / TsaD family. The cofactor is Fe(2+).

Its subcellular location is the cytoplasm. The catalysed reaction is L-threonylcarbamoyladenylate + adenosine(37) in tRNA = N(6)-L-threonylcarbamoyladenosine(37) in tRNA + AMP + H(+). Its function is as follows. Required for the formation of a threonylcarbamoyl group on adenosine at position 37 (t(6)A37) in tRNAs that read codons beginning with adenine. Is involved in the transfer of the threonylcarbamoyl moiety of threonylcarbamoyl-AMP (TC-AMP) to the N6 group of A37, together with TsaE and TsaB. TsaD likely plays a direct catalytic role in this reaction. The protein is tRNA N6-adenosine threonylcarbamoyltransferase of Rickettsia peacockii (strain Rustic).